A 335-amino-acid chain; its full sequence is Olfactory receptor 52B6 (335 aa).

Residues 1–45 are Extracellular-facing; that stretch reads MAQVRALHKIMALFSANSIGAMNNSDTRIAGCFLTGIPGLEQLHI. Asn-23 carries N-linked (GlcNAc...) asparagine glycosylation. A helical membrane pass occupies residues 46-66; sequence WLSIPFCIMYITALEGNGILI. Residues 67–74 are Cytoplasmic-facing; sequence CVILSQAI. A helical membrane pass occupies residues 75–95; that stretch reads LHEPMYIFLSMLASADVLLST. Over 96 to 119 the chain is Extracellular; that stretch reads TTMPKALANLWLGYSLISFDGCLT. Cys-117 and Cys-208 form a disulfide bridge. A helical membrane pass occupies residues 120 to 139; it reads QMFFIHFLFIHSAVLLAMAF. At 140–158 the chain is on the cytoplasmic side; the sequence is DRYVAICSPLRYVTILTSK. Residues 159-179 traverse the membrane as a helical segment; that stretch reads VIGKIVTAALSHSFIIMFPSI. Residues 180 to 215 are Extracellular-facing; it reads FLLEHLHYCQINIIAHTFCEHMGIAHLSCSDISINV. Residues 216-236 form a helical membrane-spanning segment; sequence WYGLAAALLSTGLDIMLITVS. Topologically, residues 237 to 256 are cytoplasmic; it reads YIHILQAVFRLLSQDARSKA. The helical transmembrane segment at 257 to 277 threads the bilayer; the sequence is LSTCGSHICVILLFYVPALFS. The Extracellular segment spans residues 278–293; the sequence is VFAYRFGGRSVPCYVH. The helical transmembrane segment at 294–314 threads the bilayer; it reads ILLASLYVVIPPMLNPVIYGV. Residues 315–335 lie on the Cytoplasmic side of the membrane; it reads RTKPILEGAKQMFSNLAKGSK.

Belongs to the G-protein coupled receptor 1 family.

It is found in the cell membrane. Functionally, odorant receptor. This Homo sapiens (Human) protein is Olfactory receptor 52B6 (OR52B6).